We begin with the raw amino-acid sequence, 129 residues long: Protein Wnt-6 (129 aa).

Disulfide bonds link Cys-3/Cys-17, Cys-5/Cys-12, Cys-75/Cys-106, Cys-91/Cys-101, and Cys-128/Cys-129. Residue Ser-9 is the site of O-palmitoleoyl serine; by PORCN attachment. A glycan (N-linked (GlcNAc...) asparagine) is linked at Asn-92.

This sequence belongs to the Wnt family. In terms of processing, palmitoleoylation is required for efficient binding to frizzled receptors. Depalmitoleoylation leads to Wnt signaling pathway inhibition. As to expression, at tailbud: dorsal, punctate; in adult: brain and heart.

It is found in the secreted. The protein localises to the extracellular space. The protein resides in the extracellular matrix. Its function is as follows. Ligand for members of the frizzled family of seven transmembrane receptors. Probable developmental protein. May be a signaling molecule which affects the development of discrete regions of tissues. Is likely to signal over only few cell diameters. The chain is Protein Wnt-6 (wnt6) from Xenopus laevis (African clawed frog).